A 436-amino-acid chain; its full sequence is Exodeoxyribonuclease 7 large subunit (436 aa).

The segment at 412-436 (PGGVMNKNSNTTDSTDNTENGTGEA) is disordered. The span at 417–436 (NKNSNTTDSTDNTENGTGEA) shows a compositional bias: low complexity.

It belongs to the XseA family. Heterooligomer composed of large and small subunits.

It localises to the cytoplasm. The catalysed reaction is Exonucleolytic cleavage in either 5'- to 3'- or 3'- to 5'-direction to yield nucleoside 5'-phosphates.. Functionally, bidirectionally degrades single-stranded DNA into large acid-insoluble oligonucleotides, which are then degraded further into small acid-soluble oligonucleotides. In Corynebacterium jeikeium (strain K411), this protein is Exodeoxyribonuclease 7 large subunit.